The sequence spans 953 residues: Coatomer subunit beta (953 aa).

Thr2 is modified (N-acetylthreonine). HEAT repeat units follow at residues 96–131 (HEMI…KEAE), 132–168 (LLEP…NFEH), 240–276 (SERA…SAPT), 277–314 (AIKA…HPAH), 316–353 (RVLQ…SRNV), and 396–433 (DMAA…RFDN). Position 494 is an N6-acetyllysine (Lys494).

In terms of assembly, oligomeric complex that consists of at least the alpha, beta, beta', gamma, delta, epsilon and zeta subunits. Interacts with CAPN8. Interacts with SCYL1 and PRKCE. Interacts with COPG1. Interacts with ARF1 (myristoylated); this interaction is required for binding of COPB1 to Golgi membranes. Interacts (via trunk domain) with ARF1 (via switch I region); the interaction is direct. Interacts with KCNK2 (via N-terminus); this interaction increases the channel-mediated whole cell currents and promotes plasma membrane expression of KCNK2. Interacts with STX17. Interacts with TMEM115. Interacts with TMEM41B. Post-translationally, proteolytically cleaved between Ser-528 and Ser-529 by CAPN8. As to expression, predominantly expressed in the upper one-third of the oxyntic mucosa and in most regions of the pyloric mucosa. Ubiquitously expressed including platelet, liver, heart, spleen, lung and kidney.

Its subcellular location is the cytoplasm. It is found in the golgi apparatus membrane. It localises to the cytoplasmic vesicle. The protein localises to the COPI-coated vesicle membrane. The protein resides in the cell membrane. Its subcellular location is the endoplasmic reticulum-Golgi intermediate compartment. Its function is as follows. The coatomer is a cytosolic protein complex that binds to dilysine motifs and reversibly associates with Golgi non-clathrin-coated vesicles, which further mediate biosynthetic protein transport from the ER, via the Golgi up to the trans Golgi network. Coatomer complex is required for budding from Golgi membranes, and is essential for the retrograde Golgi-to-ER transport of dilysine-tagged proteins. In mammals, the coatomer can only be recruited by membranes associated to ADP-ribosylation factors (ARFs), which are small GTP-binding proteins; the complex also influences the Golgi structural integrity, as well as the processing, activity, and endocytic recycling of LDL receptors. Involved in the Golgi disassembly and reassembly processes during cell cycle. Involved in autophagy by playing a role in early endosome function. Plays a role in organellar compartmentalization of secretory compartments including endoplasmic reticulum (ER)-Golgi intermediate compartment (ERGIC), Golgi, trans-Golgi network (TGN) and recycling endosomes, and in biosynthetic transport of CAV1. Plays a functional role in facilitating the transport of kappa-type opioid receptor mRNAs into axons and enhances translation of these proteins in cortical neurons. Required for limiting lipid storage in lipid droplets. Involved in lipid homeostasis by regulating the presence of perilipin family members PLIN2 and PLIN3 at the lipid droplet surface and promoting the association of adipocyte triglyceride lipase (PNPLA2) with the lipid droplet surface to mediate lipolysis. The polypeptide is Coatomer subunit beta (Copb1) (Mus musculus (Mouse)).